A 337-amino-acid chain; its full sequence is MKRIAVFPSGGDAPGMNAAIRAVVRKAISEGMEVYGINRGYAGMVDGDIFPLGSKEVGDKISRGGTFLYSARYPEFAQLEGQLAGIEQLKKHGIEGVVVIGGDGSYHGAMRLTEHGFPAVGIPGTIDNDIAGTDYTIGFDTAVNTAVEAIDKLRDTSSSHGRTFVVEVMGRNAGDIALWAGIASGADQIIVPEEEFDIEKVASTIQYDFEHKGKNHHIIVLAEGVMSGEAFAQKLKEAGDKSDLRVTNLGHILRGGSPTARDRVIASWMGSHAVELLKEGKGGLAVGIHNEELVESPILGTAEEGALFSLTEEGKIIVNNPHKARLDFAALNRSLSQ.

Gly11 serves as a coordination point for ATP. 21–25 is an ADP binding site; that stretch reads RAVVR. Residues 72-73 and 102-105 contribute to the ATP site; these read RY and GDGS. Asp103 contributes to the Mg(2+) binding site. Position 125 to 127 (125 to 127) interacts with substrate; sequence TID. Asp127 acts as the Proton acceptor in catalysis. An ADP-binding site is contributed by Arg154. Substrate is bound by residues Arg162 and 169-171; that span reads MGR. ADP-binding positions include 185-187, Lys212, and 214-216; these read GAD and KNH. Residues Glu223, Arg245, and 251–254 each bind substrate; that span reads HILR.

The protein belongs to the phosphofructokinase type A (PFKA) family. ATP-dependent PFK group I subfamily. Prokaryotic clade 'B1' sub-subfamily. Homotetramer. Requires Mg(2+) as cofactor.

It localises to the cytoplasm. The enzyme catalyses beta-D-fructose 6-phosphate + ATP = beta-D-fructose 1,6-bisphosphate + ADP + H(+). The protein operates within carbohydrate degradation; glycolysis; D-glyceraldehyde 3-phosphate and glycerone phosphate from D-glucose: step 3/4. Allosterically activated by ADP and other diphosphonucleosides, and allosterically inhibited by phosphoenolpyruvate. In terms of biological role, catalyzes the phosphorylation of D-fructose 6-phosphate to fructose 1,6-bisphosphate by ATP, the first committing step of glycolysis. This Streptococcus pyogenes serotype M4 (strain MGAS10750) protein is ATP-dependent 6-phosphofructokinase.